Reading from the N-terminus, the 280-residue chain is Hematopoietically-expressed homeobox protein HHEX homolog (280 aa).

Disordered stretches follow at residues 1 to 35 and 221 to 280; these read MSTLQYPGPPPPSSMNLHNPHMNHHHGLVGPGLAP and RRVK…EKEA. Positions 165–224 form a DNA-binding region, homeobox; that stretch reads RKGGQVRFSNDQTMELEKKFESQKYLSPPERKKLAKLLQLSERQVKTWFQNRRAKWRRVK. Over residues 232–252 the composition is skewed to basic and acidic residues; it reads GEGDENSHEKPRDLDRDDFSR.

It is found in the nucleus. Its function is as follows. Transcription factor that may play a central role in activating or maintaining gene expression in the vegetal pole. Part of a gene regulatory circuit with Erg and Tgif that operates early in mesoderm development. This Patiria miniata (Bat star) protein is Hematopoietically-expressed homeobox protein HHEX homolog.